A 1846-amino-acid chain; its full sequence is C2 domain-containing protein (1846 aa).

The segment at 16 to 36 (NTEKEEGKNAEINENNDPNTQ) is disordered. Residues 17–26 (TEKEEGKNAE) show a composition bias toward basic and acidic residues. Over residues 27–36 (INENNDPNTQ) the composition is skewed to polar residues. A C2 domain is found at 497-623 (VPRYRQRGDI…FNEKNVRRNK (127 aa)). Composition is skewed to basic and acidic residues over residues 1193–1211 (DEHT…DNYK) and 1230–1243 (KDDH…KVSK). 5 disordered regions span residues 1193 to 1244 (DEHT…VSKS), 1346 to 1370 (KYTI…KKQD), 1456 to 1635 (KNER…KKRV), 1652 to 1692 (NEKM…NNER), and 1827 to 1846 (EEPS…VRKN). Residues 1349 to 1506 (INEKRDDIKT…DENMKEEQKM (158 aa)) adopt a coiled-coil conformation. Basic and acidic residues-rich tracts occupy residues 1456–1474 (KNER…QKDK), 1481–1629 (ESRD…MRRE), 1652–1663 (NEKMKKKEEKEE), and 1670–1692 (KEDI…NNER). Residues 1834–1846 (SPQKKKIVIVRKN) are compositionally biased toward basic residues.

The protein resides in the membrane. Binds calcium and phospholipids. Regulates microneme secretion. The sequence is that of C2 domain-containing protein from Plasmodium falciparum (isolate 3D7).